Consider the following 488-residue polypeptide: ATP synthase subunit beta (488 aa).

164–171 contributes to the ATP binding site; sequence GGAGVGKT.

It belongs to the ATPase alpha/beta chains family. F-type ATPases have 2 components, CF(1) - the catalytic core - and CF(0) - the membrane proton channel. CF(1) has five subunits: alpha(3), beta(3), gamma(1), delta(1), epsilon(1). CF(0) has four main subunits: a(1), b(1), b'(1) and c(9-12).

The protein resides in the cellular thylakoid membrane. It catalyses the reaction ATP + H2O + 4 H(+)(in) = ADP + phosphate + 5 H(+)(out). Functionally, produces ATP from ADP in the presence of a proton gradient across the membrane. The catalytic sites are hosted primarily by the beta subunits. The protein is ATP synthase subunit beta of Prochlorococcus marinus (strain MIT 9303).